We begin with the raw amino-acid sequence, 115 residues long: Large ribosomal subunit protein bL21 (115 aa).

The protein belongs to the bacterial ribosomal protein bL21 family. As to quaternary structure, part of the 50S ribosomal subunit. Contacts protein L20.

This protein binds to 23S rRNA in the presence of protein L20. This chain is Large ribosomal subunit protein bL21, found in Picosynechococcus sp. (strain ATCC 27264 / PCC 7002 / PR-6) (Agmenellum quadruplicatum).